Reading from the N-terminus, the 572-residue chain is Proline--tRNA ligase (572 aa).

The protein belongs to the class-II aminoacyl-tRNA synthetase family. ProS type 1 subfamily. In terms of assembly, homodimer.

The protein resides in the cytoplasm. The catalysed reaction is tRNA(Pro) + L-proline + ATP = L-prolyl-tRNA(Pro) + AMP + diphosphate. Catalyzes the attachment of proline to tRNA(Pro) in a two-step reaction: proline is first activated by ATP to form Pro-AMP and then transferred to the acceptor end of tRNA(Pro). As ProRS can inadvertently accommodate and process non-cognate amino acids such as alanine and cysteine, to avoid such errors it has two additional distinct editing activities against alanine. One activity is designated as 'pretransfer' editing and involves the tRNA(Pro)-independent hydrolysis of activated Ala-AMP. The other activity is designated 'posttransfer' editing and involves deacylation of mischarged Ala-tRNA(Pro). The misacylated Cys-tRNA(Pro) is not edited by ProRS. This Salmonella schwarzengrund (strain CVM19633) protein is Proline--tRNA ligase.